The following is a 638-amino-acid chain: Polypeptide N-acetylgalactosaminyltransferase 15 (638 aa).

Residues 1–12 (MLPRKRPRSGRS) lie on the Cytoplasmic side of the membrane. Residues 13 to 35 (RLQFLLLFLTLGCVLMMVILLHP) form a helical; Signal-anchor for type II membrane protein membrane-spanning segment. Residues 36 to 638 (PPPTLHQAVT…FDQIHPVDER (603 aa)) are Lumenal-facing. Positions 134 to 157 (KDWRTEEDGEESEEVLTPLGPDSD) are disordered. 5 cysteine pairs are disulfide-bonded: Cys-181–Cys-411, Cys-402–Cys-481, Cys-516–Cys-535, Cys-561–Cys-574, and Cys-602–Cys-619. The tract at residues 190–299 (LPTASVILCF…PGWLEPLLSR (110 aa)) is catalytic subdomain A. Substrate is bound by residues Asp-231 and Arg-260. Mn(2+) contacts are provided by Asp-283, His-285, and His-416. The interval 357-419 (PVRSPVVPRE…PCSRVGHIYR (63 aa)) is catalytic subdomain B. Residue Arg-419 participates in substrate binding. Residues 503–630 (RFSGKLHNTG…GKTSQLWRFD (128 aa)) enclose the Ricin B-type lectin domain. Asn-573 is a glycosylation site (N-linked (GlcNAc...) asparagine).

Belongs to the glycosyltransferase 2 family. GalNAc-T subfamily. Mn(2+) serves as cofactor. As to expression, specifically expressed in testis.

The protein localises to the golgi apparatus membrane. The catalysed reaction is L-seryl-[protein] + UDP-N-acetyl-alpha-D-galactosamine = a 3-O-[N-acetyl-alpha-D-galactosaminyl]-L-seryl-[protein] + UDP + H(+). It catalyses the reaction L-threonyl-[protein] + UDP-N-acetyl-alpha-D-galactosamine = a 3-O-[N-acetyl-alpha-D-galactosaminyl]-L-threonyl-[protein] + UDP + H(+). Its pathway is protein modification; protein glycosylation. Functionally, catalyzes the initial reaction in O-linked oligosaccharide biosynthesis, the transfer of an N-acetyl-D-galactosamine residue to a serine or threonine residue on the protein receptor. Although it displays a much weaker activity toward all substrates tested compared to GALNT2, it is able to transfer up to seven GalNAc residues to the Muc5AC peptide, suggesting that it can fill vicinal Thr/Ser residues in cooperation with other GALNT proteins. Prefers Muc1a as substrate. The protein is Polypeptide N-acetylgalactosaminyltransferase 15 (Galnt15) of Mus musculus (Mouse).